The primary structure comprises 729 residues: E3 ubiquitin-protein ligase SH3RF2 (729 aa).

Residues 12–53 form an RING-type zinc finger; the sequence is CPVCFEKLDVTAKVLPCQHTFCKPCLQRVFKAHKELRCPECR. The disordered stretch occupies residues 78–105; the sequence is SGQSSGRGGSFRRPGTMTLQDGRKSRTN. SH3 domains lie at 125–184 and 187–252; these read DGVP…VIKQ and QPPP…PNLT. Residues 258-297 form a disordered region; sequence EKNKGRQSSRTKNLSLVSSSSRGNTSTLRRGPGSRRKVPG. A compositionally biased stretch (polar residues) spans 263–285; that stretch reads RQSSRTKNLSLVSSSSRGNTSTL. Residues 370–459 form an interaction with PAK4 region; sequence VVSLPGSQQH…RSPGLYTTWT (90 aa). The 62-residue stretch at 380 to 441 folds into the SH3 3 domain; sequence LSANMFVALH…PNNYVIPIFR (62 aa). Disordered stretches follow at residues 497 to 526 and 610 to 677; these read STAGPGTLGQGSLRKGRSSMRKNGSLQRPL and KSEP…SQPE. A compositionally biased stretch (polar residues) spans 517–526; sequence RKNGSLQRPL. The interaction with PPP1CA stretch occupies residues 641-646; the sequence is KTVRFQ. Ser649 is subject to Phosphoserine.

The protein belongs to the SH3RF family. Interacts with FASLG and PPP1CA. Interacts with PAK4 and TNFRSF1A. Interacts with DLK1, MAP3K10/MLK2, MAPK8IP1/JIP1, MAPK8IP2/JIP2 and MAPK8IP3/JIP3. Interacts with RAC1 (both active GTP- or inactive GDP-bound forms). Post-translationally, autoubiquitinated. Heart (at protein level). Up-regulated in colon cancer tissues as compared to normal colon tissues (at protein level). Testis. In the heart, present in the apex, left atrium, right atrium, left ventricle and right ventricle, but not in the aorta.

Its subcellular location is the nucleus. The catalysed reaction is S-ubiquitinyl-[E2 ubiquitin-conjugating enzyme]-L-cysteine + [acceptor protein]-L-lysine = [E2 ubiquitin-conjugating enzyme]-L-cysteine + N(6)-ubiquitinyl-[acceptor protein]-L-lysine.. Its pathway is protein modification; protein ubiquitination. Its function is as follows. Has E3 ubiquitin-protein ligase activity. Acts as an anti-apoptotic regulator of the JNK pathway by ubiquitinating and promoting the degradation of SH3RF1, a scaffold protein that is required for pro-apoptotic JNK activation. Facilitates TNF-alpha-mediated recruitment of adapter proteins TRADD and RIPK1 to TNFRSF1A and regulates PAK4 protein stability via inhibition of its ubiquitin-mediated proteasomal degradation. Inhibits PPP1CA phosphatase activity. In Homo sapiens (Human), this protein is E3 ubiquitin-protein ligase SH3RF2 (SH3RF2).